The primary structure comprises 101 residues: Apolipoprotein C-II (101 aa).

An N-terminal signal peptide occupies residues 1–22; the sequence is MGTRYFLVGFLILLVLGFEAQG. The lipid binding stretch occupies residues 66–74; sequence TVDEKIRDI. The segment at 78–101 is lipoprotein lipase cofactor; the sequence is STAAVTTYAGIITDQVFSILSGED.

It belongs to the apolipoprotein C2 family. Post-translationally, proapolipoprotein C-II is synthesized as a sialic acid containing glycoprotein which is subsequently desialylated prior to its proteolytic processing. In terms of processing, proapolipoprotein C-II, the major form found in plasma undergoes proteolytic cleavage of its N-terminal hexapeptide to generate apolipoprotein C-II, which occurs as the minor form in plasma.

The protein resides in the secreted. Its function is as follows. Component of chylomicrons, very low-density lipoproteins (VLDL), low-density lipoproteins (LDL), and high-density lipoproteins (HDL) in plasma. Plays an important role in lipoprotein metabolism as an activator of lipoprotein lipase. Both proapolipoprotein C-II and apolipoprotein C-II can activate lipoprotein lipase. The polypeptide is Apolipoprotein C-II (APOC2) (Capra hircus aegagrus (Wild goat)).